A 362-amino-acid chain; its full sequence is 4-hydroxythreonine-4-phosphate dehydrogenase (362 aa).

Residue threonine 149 coordinates substrate. A divalent metal cation is bound by residues histidine 184, histidine 229, and histidine 295. Lysine 303, asparagine 312, and arginine 321 together coordinate substrate.

It belongs to the PdxA family. As to quaternary structure, homodimer. A divalent metal cation is required as a cofactor.

The protein localises to the cytoplasm. The enzyme catalyses 4-(phosphooxy)-L-threonine + NAD(+) = 3-amino-2-oxopropyl phosphate + CO2 + NADH. It participates in cofactor biosynthesis; pyridoxine 5'-phosphate biosynthesis; pyridoxine 5'-phosphate from D-erythrose 4-phosphate: step 4/5. Catalyzes the NAD(P)-dependent oxidation of 4-(phosphooxy)-L-threonine (HTP) into 2-amino-3-oxo-4-(phosphooxy)butyric acid which spontaneously decarboxylates to form 3-amino-2-oxopropyl phosphate (AHAP). The polypeptide is 4-hydroxythreonine-4-phosphate dehydrogenase (Nostoc sp. (strain PCC 7120 / SAG 25.82 / UTEX 2576)).